Reading from the N-terminus, the 348-residue chain is Phosphoribosylformylglycinamidine cyclo-ligase (348 aa).

The protein belongs to the AIR synthase family.

It is found in the cytoplasm. The enzyme catalyses 2-formamido-N(1)-(5-O-phospho-beta-D-ribosyl)acetamidine + ATP = 5-amino-1-(5-phospho-beta-D-ribosyl)imidazole + ADP + phosphate + H(+). Its pathway is purine metabolism; IMP biosynthesis via de novo pathway; 5-amino-1-(5-phospho-D-ribosyl)imidazole from N(2)-formyl-N(1)-(5-phospho-D-ribosyl)glycinamide: step 2/2. The polypeptide is Phosphoribosylformylglycinamidine cyclo-ligase (Sorangium cellulosum (strain So ce56) (Polyangium cellulosum (strain So ce56))).